The primary structure comprises 313 residues: R2-like ligand binding oxidase (313 aa).

3 residues coordinate Mn(2+): E68, E101, and H104. Residues 71 to 162 (VTQDIQPFMS…AAQVRASVTY (92 aa)) constitute a cross-link (3-(O4'-tyrosyl)-valine (Val-Tyr)). Fe cation is bound at residue E101. Positions 167, 202, and 205 each coordinate Fe cation.

Belongs to the ribonucleoside diphosphate reductase small chain family. R2-like ligand binding oxidase subfamily. Homodimer. Requires Fe cation as cofactor. Mn(2+) is required as a cofactor.

Its function is as follows. Probable oxidase that might be involved in lipid metabolism. In Mycobacteroides abscessus (strain ATCC 19977 / DSM 44196 / CCUG 20993 / CIP 104536 / JCM 13569 / NCTC 13031 / TMC 1543 / L948) (Mycobacterium abscessus), this protein is R2-like ligand binding oxidase.